We begin with the raw amino-acid sequence, 116 residues long: Staphylococcal complement inhibitor (116 aa).

Positions 1-31 (MKIRKSILAGTLAIVLASPLVTNLDKNEAQA) are cleaved as a signal peptide. The essential for activity stretch occupies residues 62-79 (LATGSLNTYYKRTIKISG).

The protein belongs to the SCIN family.

Its subcellular location is the secreted. Its function is as follows. Involved in countering the first line of host defense mechanisms. Efficiently inhibits opsonization, phagocytosis and killing of S.aureus by human neutrophils. Acts by binding and stabilizing human C3 convertases (C4b2a and C3bBb), leading to their inactivation. The convertases are no longer able to cleave complement C3, therefore preventing further C3b deposition on the bacterial surface and phagocytosis of the bacterium. Also prevents C5a-induced neutrophil responses. This Staphylococcus aureus (strain Mu50 / ATCC 700699) protein is Staphylococcal complement inhibitor (scn).